The sequence spans 330 residues: Small ribosomal subunit protein uS2 (330 aa).

The protein belongs to the universal ribosomal protein uS2 family.

The chain is Small ribosomal subunit protein uS2 from Rhodopseudomonas palustris (strain BisA53).